The sequence spans 101 residues: Small ribosomal subunit protein uS14 (101 aa).

It belongs to the universal ribosomal protein uS14 family. As to quaternary structure, part of the 30S ribosomal subunit. Contacts proteins S3 and S10.

Its function is as follows. Binds 16S rRNA, required for the assembly of 30S particles and may also be responsible for determining the conformation of the 16S rRNA at the A site. This Ehrlichia ruminantium (strain Welgevonden) protein is Small ribosomal subunit protein uS14.